A 297-amino-acid polypeptide reads, in one-letter code: 4-hydroxy-tetrahydrodipicolinate synthase (297 aa).

A pyruvate-binding site is contributed by Thr-49. Tyr-137 functions as the Proton donor/acceptor in the catalytic mechanism. The Schiff-base intermediate with substrate role is filled by Lys-165. Ile-208 is a binding site for pyruvate.

It belongs to the DapA family. Homotetramer; dimer of dimers.

It localises to the cytoplasm. It catalyses the reaction L-aspartate 4-semialdehyde + pyruvate = (2S,4S)-4-hydroxy-2,3,4,5-tetrahydrodipicolinate + H2O + H(+). It participates in amino-acid biosynthesis; L-lysine biosynthesis via DAP pathway; (S)-tetrahydrodipicolinate from L-aspartate: step 3/4. Functionally, catalyzes the condensation of (S)-aspartate-beta-semialdehyde [(S)-ASA] and pyruvate to 4-hydroxy-tetrahydrodipicolinate (HTPA). This Gluconacetobacter diazotrophicus (strain ATCC 49037 / DSM 5601 / CCUG 37298 / CIP 103539 / LMG 7603 / PAl5) protein is 4-hydroxy-tetrahydrodipicolinate synthase.